Reading from the N-terminus, the 121-residue chain is uncharacterized protein (121 aa).

This sequence to M.jannaschii MJ0989.

This is an uncharacterized protein from Methanopyrus kandleri (strain AV19 / DSM 6324 / JCM 9639 / NBRC 100938).